Consider the following 340-residue polypeptide: GTPase Obg (340 aa).

Residues 1-159 form the Obg domain; sequence MGFIDEVKLC…KHVLLKLKVL (159 aa). In terms of domain architecture, OBG-type G spans 160–329; the sequence is SDVGIIGMPN…LSEKLKKSNS (170 aa). Residues 166–173, 191–195, 212–215, 279–282, and 310–312 each bind GTP; these read GMPNAGKS, FTTVR, DIPG, NKCD, and NGD. 2 residues coordinate Mg(2+): Ser173 and Thr193.

This sequence belongs to the TRAFAC class OBG-HflX-like GTPase superfamily. OBG GTPase family. Monomer. Requires Mg(2+) as cofactor.

The protein resides in the cytoplasm. Functionally, an essential GTPase which binds GTP, GDP and possibly (p)ppGpp with moderate affinity, with high nucleotide exchange rates and a fairly low GTP hydrolysis rate. Plays a role in control of the cell cycle, stress response, ribosome biogenesis and in those bacteria that undergo differentiation, in morphogenesis control. This chain is GTPase Obg, found in Wolbachia pipientis wMel.